A 637-amino-acid polypeptide reads, in one-letter code: Glutamate--cysteine ligase catalytic subunit (637 aa).

Residue Met-1 is modified to N-acetylmethionine. A phosphoserine mark is found at Ser-5 and Ser-8.

Belongs to the glutamate--cysteine ligase type 3 family. Heterodimer of a catalytic heavy chain and a regulatory light chain. In terms of tissue distribution, most abundant in kidney. Also found in liver and testis.

It carries out the reaction L-cysteine + L-glutamate + ATP = gamma-L-glutamyl-L-cysteine + ADP + phosphate + H(+). The enzyme catalyses (2S)-2-aminobutanoate + L-glutamate + ATP = gamma-L-glutamyl-(2S)-2-aminobutanoate + ADP + phosphate + H(+). Its pathway is sulfur metabolism; glutathione biosynthesis; glutathione from L-cysteine and L-glutamate: step 1/2. Its activity is regulated as follows. Feedback inhibition by glutathione. In terms of biological role, catalyzes the ATP-dependent ligation of L-glutamate and L-cysteine and participates in the first and rate-limiting step in glutathione biosynthesis. The sequence is that of Glutamate--cysteine ligase catalytic subunit from Rattus norvegicus (Rat).